The chain runs to 616 residues: Proline--tRNA ligase (616 aa).

The protein belongs to the class-II aminoacyl-tRNA synthetase family. ProS type 1 subfamily. As to quaternary structure, homodimer.

The protein resides in the cytoplasm. The enzyme catalyses tRNA(Pro) + L-proline + ATP = L-prolyl-tRNA(Pro) + AMP + diphosphate. Catalyzes the attachment of proline to tRNA(Pro) in a two-step reaction: proline is first activated by ATP to form Pro-AMP and then transferred to the acceptor end of tRNA(Pro). As ProRS can inadvertently accommodate and process non-cognate amino acids such as alanine and cysteine, to avoid such errors it has two additional distinct editing activities against alanine. One activity is designated as 'pretransfer' editing and involves the tRNA(Pro)-independent hydrolysis of activated Ala-AMP. The other activity is designated 'posttransfer' editing and involves deacylation of mischarged Ala-tRNA(Pro). The misacylated Cys-tRNA(Pro) is not edited by ProRS. In Streptococcus sanguinis (strain SK36), this protein is Proline--tRNA ligase.